The sequence spans 594 residues: Elongation factor 4 (594 aa).

The tr-type G domain maps to Lys-2–Glu-184. GTP contacts are provided by residues Asp-14–Thr-19 and Asn-131–Asp-134.

Belongs to the TRAFAC class translation factor GTPase superfamily. Classic translation factor GTPase family. LepA subfamily.

It localises to the cell inner membrane. It carries out the reaction GTP + H2O = GDP + phosphate + H(+). Required for accurate and efficient protein synthesis under certain stress conditions. May act as a fidelity factor of the translation reaction, by catalyzing a one-codon backward translocation of tRNAs on improperly translocated ribosomes. Back-translocation proceeds from a post-translocation (POST) complex to a pre-translocation (PRE) complex, thus giving elongation factor G a second chance to translocate the tRNAs correctly. Binds to ribosomes in a GTP-dependent manner. In Francisella tularensis subsp. tularensis (strain FSC 198), this protein is Elongation factor 4.